The chain runs to 866 residues: E3 ubiquitin-protein ligase RNF216 (866 aa).

3 disordered regions span residues 46–117, 131–161, and 211–240; these read LVTP…NPRS, YTESDPLETQNQSSEDSETELLSNLGESAAL, and EFPGPAFPRPEPQQGGISGPSSPQPAHPLG. Over residues 55–76 the composition is skewed to acidic residues; that stretch reads EEEDLDDDVILTEDDSEDDYGE. Residues L80, T89, and K100 each participate in a glycyl lysine isopeptide (Lys-Gly) (interchain with G-Cter in SUMO2) cross-link. Residues 137–156 show a composition bias toward polar residues; it reads LETQNQSSEDSETELLSNLG. Residues K351 and K354 each participate in a glycyl lysine isopeptide (Lys-Gly) (interchain with G-Cter in SUMO2) cross-link. Residue S419 is modified to Phosphoserine. Residues K425, K430, K448, K459, and K485 each participate in a glycyl lysine isopeptide (Lys-Gly) (interchain with G-Cter in SUMO2) cross-link. Positions 475-491 form a coiled coil; the sequence is VQQEQEFYEQKIKEMAE. The tract at residues 511 to 728 is TRIAD supradomain; it reads QLIECRCCYG…SPGAPCQECS (218 aa). 6 residues coordinate Zn(2+): C515, C518, C537, C540, C605, and C608. The RING-type 1 zinc finger occupies 515–564; it reads CRCCYGEFPFEELTQCADAHLFCKECLIRYAQEAVFGSGKLELSCMEGSC. Residues 583-648 form an IBR-type zinc finger; that stretch reads YKYYERKAEE…LWKEHNGLTC (66 aa). Residue K619 forms a Glycyl lysine isopeptide (Lys-Gly) (interchain with G-Cter in SUMO2) linkage. C623, C628, C633, C636, H643, and C648 together coordinate Zn(2+). Glycyl lysine isopeptide (Lys-Gly) (interchain with G-Cter in SUMO2) cross-links involve residues K658 and K666. Residues C675 and C678 each contribute to the Zn(2+) site. The RING-type 2; atypical zinc finger occupies 675–703; sequence CHKCGTGLIKSEGCNRMSCRCGAQMCYLC. C688 is a catalytic residue. Residues C693, C695, C700, C703, and H716 each contribute to the Zn(2+) site. The residue at position 719 (S719) is a Phosphoserine; by MAPK1. A Zn(2+)-binding site is contributed by C724. Residues 737–763 are a coiled coil; it reads TEDDEKLIEEIQKEAEEEQKRKNGENT. Residues K765 and K773 each participate in a glycyl lysine isopeptide (Lys-Gly) (interchain with G-Cter in SUMO2) cross-link.

In terms of assembly, interacts with UBE2L3 and to some extent with UBE2L6. Interacts with TRAF3, TLR3, TLR4, TLR5 and TLR9. Isoform 3/ZIN binds RIPK1. (Microbial infection) Isoform 3/ZIN binds RIPK1 and HIV Vif. Post-translationally, auto-ubiquitinated. In terms of processing, phosphorylation at Ser-719 enhances acceptor ubiquitin binding and chain-type specificity towards 'Lys-63' di-ubiquitin but not di-ubiquitin with other linkage types. As to expression, ubiquitous, with the highest levels of expression in testis and peripheral blood leukocytes.

Its subcellular location is the cytoplasm. The protein localises to the cytoplasmic vesicle. It localises to the clathrin-coated vesicle. The catalysed reaction is S-ubiquitinyl-[E2 ubiquitin-conjugating enzyme]-L-cysteine + [acceptor protein]-L-lysine = [E2 ubiquitin-conjugating enzyme]-L-cysteine + N(6)-ubiquitinyl-[acceptor protein]-L-lysine.. It participates in protein modification; protein ubiquitination. With respect to regulation, allosterically activated by 'Lys-63'-linked di-ubiquitin. E3 ubiquitin ligase which accepts ubiquitin from specific E2 ubiquitin-conjugating enzymes, and then transfers it to substrates promoting their ubiquitination. Plays a role in the regulation of antiviral responses by promoting the degradation of TRAF3, TLR4 and TLR9. In turn, down-regulates NF-kappa-B and IRF3 activation as well as beta interferon production. Also participates in the regulation of autophagy by ubiquitinating BECN1 leading to its degradation and autophagy inhibition. Plays a role in ARC-dependent synaptic plasticity by mediating ARC ubiquitination resulting in its rapid proteasomal degradation. Plays aso an essential role in spermatogenesis and male fertility. Mechanistically, regulates meiosis by promoting the degradation of PRKACB through the ubiquitin-mediated lysosome pathway. Modulates the gonadotropin-releasing hormone signal pathway by affecting the stability of STAU2 that is required for the microtubule-dependent transport of neuronal RNA from the cell body to the dendrite. In terms of biological role, inhibits TNF and IL-1 mediated activation of NF-kappa-B. Promotes TNF and RIP mediated apoptosis. This is E3 ubiquitin-protein ligase RNF216 (RNF216) from Homo sapiens (Human).